Here is a 703-residue protein sequence, read N- to C-terminus: tRNA 5-methylaminomethyl-2-thiouridine biosynthesis bifunctional protein MnmC (703 aa).

The tRNA (mnm(5)s(2)U34)-methyltransferase stretch occupies residues 1–281 (MTAKPQKSCQ…KPAALVAKDH (281 aa)). The tract at residues 286-703 (VGGGLASANL…LRKLLKGKAL (418 aa)) is FAD-dependent cmnm(5)s(2)U34 oxidoreductase.

It in the N-terminal section; belongs to the methyltransferase superfamily. tRNA (mnm(5)s(2)U34)-methyltransferase family. The protein in the C-terminal section; belongs to the DAO family. Requires FAD as cofactor.

Its subcellular location is the cytoplasm. It catalyses the reaction 5-aminomethyl-2-thiouridine(34) in tRNA + S-adenosyl-L-methionine = 5-methylaminomethyl-2-thiouridine(34) in tRNA + S-adenosyl-L-homocysteine + H(+). Its function is as follows. Catalyzes the last two steps in the biosynthesis of 5-methylaminomethyl-2-thiouridine (mnm(5)s(2)U) at the wobble position (U34) in tRNA. Catalyzes the FAD-dependent demodification of cmnm(5)s(2)U34 to nm(5)s(2)U34, followed by the transfer of a methyl group from S-adenosyl-L-methionine to nm(5)s(2)U34, to form mnm(5)s(2)U34. This is tRNA 5-methylaminomethyl-2-thiouridine biosynthesis bifunctional protein MnmC from Shewanella sp. (strain MR-7).